The chain runs to 397 residues: Translocase of chloroplast 34 homolog, chloroplastic (397 aa).

The interval 1-72 (MAQPPRPAEE…SQPWAGLNRL (72 aa)) is disordered. Acidic residues-rich tracts occupy residues 10-32 (EYDDDVQEDEDELKEGELDDDES) and 44-63 (AGDEEAEDDEQDEEDGDEDS). The 232-residue stretch at 90–321 (RKQLTVLLLG…YKYHPRLSSK (232 aa)) folds into the AIG1-type G domain. The G1 stretch occupies residues 99 to 106 (GKSSVGKS). GTP-binding positions include 102-107 (SVGKSS) and 121-126 (QAFKLQ). Ser-106 serves as a coordination point for Mg(2+). The segment at 121 to 124 (QAFK) is homodimerization. Residues 126-130 (QADTD) are G2. The tract at residues 155–158 (DTCG) is G3. The homodimerization stretch occupies residues 193-198 (RLDLYR). The G4 stretch occupies residues 227-230 (THAN). Residues His-228 and 271-272 (EN) each bind GTP. The interval 271-273 (ENS) is G5. The helical transmembrane segment at 329–349 (LLPVAIAAEVLFYRRFLHPRL) threads the bilayer. The short motif at 350–358 (DDNQRRVER) is the AKR2A-binding sequence (ABS) required for chloroplast outer envelope membrane targeting element.

This sequence belongs to the TRAFAC class TrmE-Era-EngA-EngB-Septin-like GTPase superfamily. AIG1/Toc34/Toc159-like paraseptin GTPase family. TOC34 subfamily. As to quaternary structure, homodimer, heterodimer with other TOC proteins, and monomer. Part of the TOC core complex that includes 1 protein for the specific recognition of transit peptides surrounded by a ring composed of four proteins forming translocation channels, and four to five GTP-binding proteins providing energy. This core complex can interact with components of the TIC complex to form a larger import complex. Interacts with ARSA1. Mg(2+) is required as a cofactor.

The protein localises to the plastid. Its subcellular location is the chloroplast outer membrane. GTPase involved in protein precursor import into chloroplasts. Seems to recognize chloroplast-destined precursor proteins and regulate their presentation to the translocation channel through GTP hydrolysis. Functions as an essential component of the outer chloroplast membrane translocon (TOC) complex, which, in turn, catalyzes the import of nucleus-encoded precursor polypeptides from the cytoplasm to the chloroplast. This chain is Translocase of chloroplast 34 homolog, chloroplastic, found in Chlamydomonas reinhardtii (Chlamydomonas smithii).